We begin with the raw amino-acid sequence, 246 residues long: Transmembrane protein 41 homolog (246 aa).

Transmembrane regions (helical) follow at residues 12 to 32 (WLVLLIFATFAVSIFAVYSNF), 68 to 88 (SVVLCGVIVVYVFLQSFAIPG), 101 to 123 (PFYVAIVLVCSCSATGAAICYTI), 159 to 179 (IFLRVTPIVPNWLINIASPVL), 182 to 202 (PLAPFFWGTFLGVAPPSFLYI), and 219 to 239 (SWSSIVLLTGSAILSLAPILL).

The protein belongs to the TMEM41 family.

Its subcellular location is the membrane. The polypeptide is Transmembrane protein 41 homolog (tag-175) (Caenorhabditis elegans).